The sequence spans 634 residues: 1-deoxy-D-xylulose-5-phosphate synthase (634 aa).

Residues His79 and 120 to 122 (GHA) each bind thiamine diphosphate. Mg(2+) is bound at residue Asp151. Thiamine diphosphate-binding positions include 152–153 (GS), Asn180, Tyr292, and Glu376. Mg(2+) is bound at residue Asn180.

This sequence belongs to the transketolase family. DXPS subfamily. In terms of assembly, homodimer. It depends on Mg(2+) as a cofactor. The cofactor is thiamine diphosphate.

The enzyme catalyses D-glyceraldehyde 3-phosphate + pyruvate + H(+) = 1-deoxy-D-xylulose 5-phosphate + CO2. It functions in the pathway metabolic intermediate biosynthesis; 1-deoxy-D-xylulose 5-phosphate biosynthesis; 1-deoxy-D-xylulose 5-phosphate from D-glyceraldehyde 3-phosphate and pyruvate: step 1/1. Functionally, catalyzes the acyloin condensation reaction between C atoms 2 and 3 of pyruvate and glyceraldehyde 3-phosphate to yield 1-deoxy-D-xylulose-5-phosphate (DXP). The sequence is that of 1-deoxy-D-xylulose-5-phosphate synthase from Porphyromonas gingivalis (strain ATCC BAA-308 / W83).